A 352-amino-acid chain; its full sequence is MSILAEKLSSILKRYDELTALLSSAEVISDIKKLTELSKEQSSIEEISIASKEYLSVLEDIKENKELLEDKELSELAKEELKILETKKSDLETAIKQLLIPKDPNDDKNIYLELRAGTGGDEAGIFVGDLFKAYCRYADLKKWKVEIVSSSENSVGGYKEIIALIKGKGVYSRLKFEAGTHRVQRVPETESQGRIHTSAITVAIMPEVDDVEVSINPSDLKIEVFRAGGHGGQCVNTTDSAVRITHLPTNISVSMQDEKSQHKNKDKALKILKARLYEKQIEEQQLANAKDRKEQVGSGDRSERIRTYNYPQNRLSEHRINLTLYSLEEIMLSGNLDEVINPLIAHAQSQFE.

Position 233 is an N5-methylglutamine (Gln-233). The interval 288–309 (NAKDRKEQVGSGDRSERIRTYN) is disordered. Over residues 289–306 (AKDRKEQVGSGDRSERIR) the composition is skewed to basic and acidic residues.

The protein belongs to the prokaryotic/mitochondrial release factor family. In terms of processing, methylated by PrmC. Methylation increases the termination efficiency of RF1.

It is found in the cytoplasm. Peptide chain release factor 1 directs the termination of translation in response to the peptide chain termination codons UAG and UAA. In Helicobacter pylori (strain G27), this protein is Peptide chain release factor 1.